The following is a 418-amino-acid chain: Homocitrate synthase, mitochondrial (418 aa).

A compositionally biased stretch (polar residues) spans 1 to 10 (MSVSEANGTE). The segment at 1–25 (MSVSEANGTETIKPPMNGNPYGPNP) is disordered. Positions 14–25 (PPMNGNPYGPNP) are enriched in low complexity. Residues 35–288 (FSIIESTLRE…THKYKLNQLR (254 aa)) form the Pyruvate carboxyltransferase domain. The 2-oxoglutarate site is built by R43, E44, and H103. L-lysine is bound at residue E44. E44 provides a ligand contact to Zn(2+). Residue D123 participates in L-lysine binding. 2-oxoglutarate contacts are provided by R163, S165, T197, H224, and H226. T197 contacts L-lysine. Zn(2+)-binding residues include H224 and H226. H321 functions as the Proton acceptor in the catalytic mechanism.

It belongs to the alpha-IPM synthase/homocitrate synthase family. Homocitrate synthase LYS20/LYS21 subfamily. Requires Mg(2+) as cofactor. Mn(2+) is required as a cofactor. It depends on Zn(2+) as a cofactor. The cofactor is Co(2+).

Its subcellular location is the mitochondrion. It catalyses the reaction acetyl-CoA + 2-oxoglutarate + H2O = (2R)-homocitrate + CoA + H(+). The protein operates within amino-acid biosynthesis; L-lysine biosynthesis via AAA pathway; L-alpha-aminoadipate from 2-oxoglutarate: step 1/5. Its activity is regulated as follows. The activity is controled by feedback inhibition by L-lysine, the final product of the pathway that acts as a competitive inhibitor of 2-oxoglutarate. In terms of biological role, catalyzes the aldol-type condensation of 2-oxoglutarate with acetyl-CoA to yield homocitrate, the first step of the alpha-aminoadipate (AAA) lysine biosynthesis pathway. This is Homocitrate synthase, mitochondrial from Schizosaccharomyces pombe (strain 972 / ATCC 24843) (Fission yeast).